Consider the following 136-residue polypeptide: Small ribosomal subunit protein uS9 (136 aa).

This sequence belongs to the universal ribosomal protein uS9 family.

The polypeptide is Small ribosomal subunit protein uS9 (Synechococcus sp. (strain JA-2-3B'a(2-13)) (Cyanobacteria bacterium Yellowstone B-Prime)).